A 181-amino-acid chain; its full sequence is UPF0397 protein SSU98_0390 (181 aa).

Transmembrane regions (helical) follow at residues 9–29 (VVAT…INIP), 46–66 (LLAV…GHTL), 70–90 (LTYG…LVVG), 108–128 (ILFF…VIAP), and 147–167 (LVAG…LLVV).

The protein belongs to the UPF0397 family.

The protein localises to the cell membrane. This is UPF0397 protein SSU98_0390 from Streptococcus suis (strain 98HAH33).